A 617-amino-acid chain; its full sequence is 5-hydroxytryptamine receptor 2B (617 aa).

The Extracellular segment spans residues 1-95 (MLKTVTTAMA…LLVKMIAMAV (95 aa)). N-linked (GlcNAc...) asparagine glycans are attached at residues Asn31, Asn41, Asn51, and Asn58. A helical membrane pass occupies residues 96-116 (VLGLMILVTIIGNVFVIAAII). Residues 117–128 (LERNLQNVANYL) lie on the Cytoplasmic side of the membrane. A helical transmembrane segment spans residues 129-149 (VASLAVADLFVACLVMPLGAV). Residues 150-164 (YEISNGWILGPELCD) are Extracellular-facing. A disulfide bond links Cys163 and Cys242. The helical transmembrane segment at 165-185 (IWTSCDVLCCTASILHLVAIA) threads the bilayer. At 186-205 (ADRYWTVTNIDYNNLRTPRR) the chain is on the cytoplasmic side. The helical transmembrane segment at 206–226 (VFLMIFCVWFAALIVSLAPQF) threads the bilayer. Over 227 to 256 (GWKDPDYMKRIEEQHCMVSQDVGYQIFATC) the chain is Extracellular. Residues 257 to 277 (CTFYVPLLVILFLYWKIYIIA) traverse the membrane as a helical segment. The Cytoplasmic portion of the chain corresponds to 278 to 534 (RKRIQRRAQK…EAKRERKAAQ (257 aa)). A disordered region spans residues 309-336 (RSKRRAERKRLEAGERTPVDGDGTGGQL). Over residues 317-327 (KRLEAGERTPV) the composition is skewed to basic and acidic residues. The helical transmembrane segment at 535-555 (TLAIITGAFVICWLPFFVMAL) threads the bilayer. Residues 556-570 (TMSLCKECEIHTAVA) are Extracellular-facing. Residues 571–591 (SLFLWLGYFNSTLNPVIYTIF) traverse the membrane as a helical segment. Over 592–617 (NPEFRRAFKRILFGRKAAARARSAKI) the chain is Cytoplasmic.

This sequence belongs to the G-protein coupled receptor 1 family.

It is found in the cell membrane. Functionally, this is one of the several different receptors for 5-hydroxytryptamine (serotonin), a biogenic hormone that functions as a neurotransmitter, a hormone, and a mitogen. The activity of this receptor is mediated by G proteins which inhibit adenylate cyclase. The protein is 5-hydroxytryptamine receptor 2B (5-HT1B) of Drosophila melanogaster (Fruit fly).